We begin with the raw amino-acid sequence, 521 residues long: Circadian clock oscillator protein KaiC (521 aa).

KaiC domains follow at residues 1-248 and 262-521; these read MNEP…INIF and ARIS…LDEE. Gly-50, Thr-51, Gly-52, Lys-53, Thr-54, Leu-55, Ser-90, Lys-225, Leu-226, Arg-227, Thr-229, His-231, Thr-241, Thr-291, Gly-292, Thr-293, Gly-294, Lys-295, Thr-296, and Leu-297 together coordinate ATP. Thr-54 is a Mg(2+) binding site. Residue Thr-296 participates in Mg(2+) binding. Glu-319 contacts Mg(2+). Trp-332 contacts ATP. Ser-432 bears the Phosphoserine; by autocatalysis mark. Phosphothreonine; by autocatalysis is present on Thr-433. Residues Arg-452, Lys-458, Met-459, Arg-460, Ser-462, His-464, and Lys-466 each coordinate ATP.

This sequence belongs to the KaiC family. As to quaternary structure, homohexamer; hexamerization is dependent on ATP-binding. The KaiABC complex composition changes during the circadian cycle to control KaiC phosphorylation. Complexes KaiC(6), KaiA(2-4):KaiC(6), KaiB(6):KaiC(6) and KaiC(6):KaiB(6):KaiA(12) are among the most important forms, many form cooperatively. KaiC interacts with SasA, activating its autokinase function and leading to RpaA activation. Mg(2+) is required as a cofactor. In terms of processing, phosphorylated on serine and threonine residues by autocatalysis. Has a 4 step phosphorylation cycle; the autokinase acts first on Thr-433, then Ser-432. When Ser-432 is modified KaiC switches to an autophosphatase mode, acting first on phospho-Thr-433 then phospho-Ser-432.

The catalysed reaction is L-seryl-[protein] + ATP = O-phospho-L-seryl-[protein] + ADP + H(+). It carries out the reaction L-threonyl-[protein] + ATP = O-phospho-L-threonyl-[protein] + ADP + H(+). It catalyses the reaction ATP + H2O = ADP + phosphate + H(+). Its activity is regulated as follows. The interaction with KaiA enhances its phosphorylation status, while the interaction with KaiB decreases it. In terms of biological role, central component of the KaiABC oscillator complex, which constitutes the main circadian regulator in cyanobacteria. Complex composition changes during the circadian cycle to control KaiC phosphorylation. KaiA stimulates KaiC autophosphorylation, while KaiB sequesters KaiA, leading to KaiC autodephosphorylation. Clock output pathways impact the RpaA transcriptional regulator. KaiC enhances the autophosphorylation activity of SasA, which then transfers its phosphate group to RpaA to activate it. KaiB and KaiC together enhance the phospho-RpaA dephosphatase activity of CikA. Has a weak, temperature-independent ATPase activity; ATPase activity defines the circadian period. The phosphorylation state of KaiC modulates its ATPase activity and effects KaiB binding. This chain is Circadian clock oscillator protein KaiC, found in Rippkaea orientalis (strain PCC 8801 / RF-1) (Cyanothece sp. (strain PCC 8801)).